Consider the following 433-residue polypeptide: UDP-N-acetylglucosamine 1-carboxyvinyltransferase (433 aa).

34–35 (KN) provides a ligand contact to phosphoenolpyruvate. R104 lines the UDP-N-acetyl-alpha-D-glucosamine pocket. C128 serves as the catalytic Proton donor. C128 carries the 2-(S-cysteinyl)pyruvic acid O-phosphothioketal modification. The UDP-N-acetyl-alpha-D-glucosamine site is built by D320 and I342.

Belongs to the EPSP synthase family. MurA subfamily.

The protein resides in the cytoplasm. It carries out the reaction phosphoenolpyruvate + UDP-N-acetyl-alpha-D-glucosamine = UDP-N-acetyl-3-O-(1-carboxyvinyl)-alpha-D-glucosamine + phosphate. Its pathway is cell wall biogenesis; peptidoglycan biosynthesis. Functionally, cell wall formation. Adds enolpyruvyl to UDP-N-acetylglucosamine. The chain is UDP-N-acetylglucosamine 1-carboxyvinyltransferase from Parasynechococcus marenigrum (strain WH8102).